Reading from the N-terminus, the 284-residue chain is Bifunctional protein FolD 1 (284 aa).

NADP(+) is bound by residues 166–168 (GAS) and Ile232.

The protein belongs to the tetrahydrofolate dehydrogenase/cyclohydrolase family. Homodimer.

It catalyses the reaction (6R)-5,10-methylene-5,6,7,8-tetrahydrofolate + NADP(+) = (6R)-5,10-methenyltetrahydrofolate + NADPH. The catalysed reaction is (6R)-5,10-methenyltetrahydrofolate + H2O = (6R)-10-formyltetrahydrofolate + H(+). The protein operates within one-carbon metabolism; tetrahydrofolate interconversion. Its function is as follows. Catalyzes the oxidation of 5,10-methylenetetrahydrofolate to 5,10-methenyltetrahydrofolate and then the hydrolysis of 5,10-methenyltetrahydrofolate to 10-formyltetrahydrofolate. This is Bifunctional protein FolD 1 from Pseudomonas syringae pv. tomato (strain ATCC BAA-871 / DC3000).